The sequence spans 201 residues: dITP/XTP pyrophosphatase (201 aa).

9-14 (SNNAGK) provides a ligand contact to substrate. The Mg(2+) site is built by E41 and D70. D70 (proton acceptor) is an active-site residue. Substrate-binding positions include S71, 155–158 (FGYD), K178, and 183–184 (HR).

This sequence belongs to the HAM1 NTPase family. In terms of assembly, homodimer. The cofactor is Mg(2+).

The catalysed reaction is XTP + H2O = XMP + diphosphate + H(+). It carries out the reaction dITP + H2O = dIMP + diphosphate + H(+). It catalyses the reaction ITP + H2O = IMP + diphosphate + H(+). Its function is as follows. Pyrophosphatase that catalyzes the hydrolysis of nucleoside triphosphates to their monophosphate derivatives, with a high preference for the non-canonical purine nucleotides XTP (xanthosine triphosphate), dITP (deoxyinosine triphosphate) and ITP. Seems to function as a house-cleaning enzyme that removes non-canonical purine nucleotides from the nucleotide pool, thus preventing their incorporation into DNA/RNA and avoiding chromosomal lesions. In Methylococcus capsulatus (strain ATCC 33009 / NCIMB 11132 / Bath), this protein is dITP/XTP pyrophosphatase.